The sequence spans 155 residues: Small ribosomal subunit protein uS7cz/uS7cy (155 aa).

Belongs to the universal ribosomal protein uS7 family. In terms of assembly, part of the 30S ribosomal subunit.

Its subcellular location is the plastid. It localises to the chloroplast. In terms of biological role, one of the primary rRNA binding proteins, it binds directly to 16S rRNA where it nucleates assembly of the head domain of the 30S subunit. This is Small ribosomal subunit protein uS7cz/uS7cy (rps7-A) from Lotus japonicus (Lotus corniculatus var. japonicus).